The following is a 244-amino-acid chain: Aspartate/glutamate leucyltransferase (244 aa).

It belongs to the R-transferase family. Bpt subfamily.

It is found in the cytoplasm. The enzyme catalyses N-terminal L-glutamyl-[protein] + L-leucyl-tRNA(Leu) = N-terminal L-leucyl-L-glutamyl-[protein] + tRNA(Leu) + H(+). It carries out the reaction N-terminal L-aspartyl-[protein] + L-leucyl-tRNA(Leu) = N-terminal L-leucyl-L-aspartyl-[protein] + tRNA(Leu) + H(+). Functions in the N-end rule pathway of protein degradation where it conjugates Leu from its aminoacyl-tRNA to the N-termini of proteins containing an N-terminal aspartate or glutamate. This is Aspartate/glutamate leucyltransferase from Bordetella parapertussis (strain 12822 / ATCC BAA-587 / NCTC 13253).